We begin with the raw amino-acid sequence, 166 residues long: Antibacterial peptide PMAP-36 (166 aa).

The signal sequence occupies residues 1–29; it reads METQRASLCLGRWSLWLLLLGLVVPSASA. A propeptide spanning residues 30-129 is cleaved from the precursor; that stretch reads QALSYREAVL…LDINCDEIQS (100 aa). Cystine bridges form between Cys-85-Cys-96 and Cys-107-Cys-124.

The protein belongs to the cathelicidin family.

The protein localises to the secreted. Functionally, exerts antimicrobial activity against both Gram-positive and negative bacteria. Its activity appears to be mediated by its ability to damage bacterial membranes. The polypeptide is Antibacterial peptide PMAP-36 (PMAP36) (Sus scrofa (Pig)).